A 400-amino-acid polypeptide reads, in one-letter code: CCA-adding enzyme (400 aa).

Glycine 28 and arginine 31 together coordinate ATP. The CTP site is built by glycine 28 and arginine 31. Mg(2+) is bound by residues aspartate 41 and aspartate 43. Arginine 112, aspartate 155, arginine 158, arginine 161, and arginine 164 together coordinate ATP. The CTP site is built by arginine 112, aspartate 155, arginine 158, arginine 161, and arginine 164.

Belongs to the tRNA nucleotidyltransferase/poly(A) polymerase family. Bacterial CCA-adding enzyme type 3 subfamily. In terms of assembly, homodimer. The cofactor is Mg(2+).

The catalysed reaction is a tRNA precursor + 2 CTP + ATP = a tRNA with a 3' CCA end + 3 diphosphate. The enzyme catalyses a tRNA with a 3' CCA end + 2 CTP + ATP = a tRNA with a 3' CCACCA end + 3 diphosphate. Functionally, catalyzes the addition and repair of the essential 3'-terminal CCA sequence in tRNAs without using a nucleic acid template. Adds these three nucleotides in the order of C, C, and A to the tRNA nucleotide-73, using CTP and ATP as substrates and producing inorganic pyrophosphate. tRNA 3'-terminal CCA addition is required both for tRNA processing and repair. Also involved in tRNA surveillance by mediating tandem CCA addition to generate a CCACCA at the 3' terminus of unstable tRNAs. While stable tRNAs receive only 3'-terminal CCA, unstable tRNAs are marked with CCACCA and rapidly degraded. The polypeptide is CCA-adding enzyme (Staphylococcus epidermidis (strain ATCC 12228 / FDA PCI 1200)).